The primary structure comprises 778 residues: Actin-binding LIM protein 1 (778 aa).

4 LIM zinc-binding domains span residues 97 to 156 (IHCH…MYGT), 156 to 216 (TRCH…MSSS), 224 to 283 (SNCA…LFGV), and 283 to 343 (VKCE…TKTE). Residue Ser-216 is modified to Phosphoserine. Residues 339–370 (STKTEEKLRPTRTSSESIYSRPGSSIPGSPGH) form a disordered region. Residues 360–369 (PGSSIPGSPG) show a composition bias toward low complexity. Phosphoserine is present on Ser-367. Phosphotyrosine is present on residues Tyr-373 and Tyr-396. Disordered stretches follow at residues 414–510 (YDDK…QAPK) and 552–597 (AAQA…EELL). 3 positions are modified to phosphoserine: Ser-422, Ser-426, and Ser-431. The segment covering 423 to 434 (LGESPRTLSPTP) has biased composition (polar residues). Thr-433 is subject to Phosphothreonine. The residue at position 435 (Ser-435) is a Phosphoserine. Residue Tyr-439 is modified to Phosphotyrosine. The span at 449 to 474 (RSTSQGSINSPVYSRHSYTPTTSRSP) shows a compositional bias: polar residues. Phosphoserine occurs at positions 452, 455, 458, 498, and 587. The stretch at 590–614 (EEDDEELLRRRQLQEEQLMKLNSGL) forms a coiled coil. Lys-620 participates in a covalent cross-link: Glycyl lysine isopeptide (Lys-Gly) (interchain with G-Cter in SUMO2). A phosphoserine mark is found at Ser-640, Ser-655, Ser-677, and Ser-706. Residues 710–778 (MLEPKIFPYE…NDMKKKAKLF (69 aa)) enclose the HP domain.

In terms of assembly, binds F-actin. Interacts with ABRA. As to expression, detected in liver, heart, skeletal muscle, brain and retina, where it is concentrated in the inner segment and in the outer plexiform layers.

It is found in the cytoplasm. Its subcellular location is the cytoskeleton. Its function is as follows. May act as scaffold protein. May play a role in the development of the retina. Has been suggested to play a role in axon guidance. The protein is Actin-binding LIM protein 1 (ABLIM1) of Homo sapiens (Human).